Reading from the N-terminus, the 700-residue chain is Mitosis inducer protein blt1 (700 aa).

Composition is skewed to polar residues over residues 1 to 11 and 43 to 53; these read MSKSAFTSKSQ and PRSTALPNLSN. Disordered regions lie at residues 1 to 53 and 266 to 293; these read MSKS…NLSN and TNNR…SKDQ. The span at 273-284 shows a compositional bias: low complexity; sequence GSDGSNSNFNGG. Positions 496–575 form a coiled coil; it reads SVALDDHNRQ…LNMLQKLSMQ (80 aa). Disordered regions lie at residues 634-659 and 671-700; these read FSSF…RKPS and SSGS…SSKM. Position 636 is a phosphoserine (serine 636).

As to quaternary structure, interacts with cdr2, mid1 and sad1.

The protein localises to the cytoplasm. Its subcellular location is the cytoskeleton. In terms of biological role, at the onset of mitosis, forms a medial ring structure before the arrangement of the medial actin ring. Essential for the central positioning of the division septum before the cell divides. In Schizosaccharomyces pombe (strain 972 / ATCC 24843) (Fission yeast), this protein is Mitosis inducer protein blt1 (blt1).